The chain runs to 883 residues: Translation initiation factor IF-2 (883 aa).

Disordered stretches follow at residues 52–102 and 115–297; these read KGRD…VNVE and VEAE…PTQP. 2 stretches are compositionally biased toward basic and acidic residues: residues 115 to 179 and 204 to 237; these read VEAE…REAT and AAEKEEARRREEEKERRRLEQEARREREAEERAA. A compositionally biased stretch (low complexity) spans 239–248; sequence KTGATAPAAK. A compositionally biased stretch (basic residues) spans 265–275; it reads PGRRGGKKGGR. The span at 276–285 shows a compositional bias: low complexity; it reads RAASGGEAAK. Residues 383–550 form the tr-type G domain; that stretch reads PRPPVVTVMG…AILLQAELME (168 aa). A G1 region spans residues 392–399; sequence GHVDHGKT. 392–399 provides a ligand contact to GTP; that stretch reads GHVDHGKT. The tract at residues 417-421 is G2; it reads GITQH. The tract at residues 438-441 is G3; it reads DTPG. GTP is bound by residues 438–442 and 492–495; these read DTPGH and NKID. The tract at residues 492–495 is G4; it reads NKID. The segment at 528–530 is G5; it reads SAK.

This sequence belongs to the TRAFAC class translation factor GTPase superfamily. Classic translation factor GTPase family. IF-2 subfamily.

The protein resides in the cytoplasm. Functionally, one of the essential components for the initiation of protein synthesis. Protects formylmethionyl-tRNA from spontaneous hydrolysis and promotes its binding to the 30S ribosomal subunits. Also involved in the hydrolysis of GTP during the formation of the 70S ribosomal complex. The polypeptide is Translation initiation factor IF-2 (Alkalilimnicola ehrlichii (strain ATCC BAA-1101 / DSM 17681 / MLHE-1)).